The chain runs to 93 residues: N-acetyl-S-hydroxy-L-cysteine reductase (93 aa).

A Glutaredoxin domain is found at 1–93; that stretch reads MSDVVNIVVW…NHAQIKEAKR (93 aa). Residues Cys15 and Cys18 are joined by a disulfide bond.

It belongs to the glutaredoxin family.

It catalyses the reaction N-acetyl-S-hydroxy-L-cysteine + AH2 = N-acetyl-L-cysteine + A + H2O. It functions in the pathway amino-acid metabolism. Involved in a cysteine salvage pathway from S-alkylcysteine. Catalyzes the reduction of N-acetyl-S-hydroxy-L-cysteine (N-acetyl-L-cysteine sulfenic acid) to N-acetyl-L-cysteine. This pathway is likely important in the catabolism of alkylated cysteine generated by proteolysis of alkylated glutathione formed in the detoxification of a wide range of electrophiles. This chain is N-acetyl-S-hydroxy-L-cysteine reductase, found in Bacillus subtilis (strain 168).